Reading from the N-terminus, the 702-residue chain is Elongation factor G (702 aa).

Residues 8 to 290 (ARYRNIGISA…AVIEYLPAPT (283 aa)) enclose the tr-type G domain. GTP contacts are provided by residues 17–24 (AHIDAGKT), 88–92 (DTPGH), and 142–145 (NKMD).

The protein belongs to the TRAFAC class translation factor GTPase superfamily. Classic translation factor GTPase family. EF-G/EF-2 subfamily.

It localises to the cytoplasm. Catalyzes the GTP-dependent ribosomal translocation step during translation elongation. During this step, the ribosome changes from the pre-translocational (PRE) to the post-translocational (POST) state as the newly formed A-site-bound peptidyl-tRNA and P-site-bound deacylated tRNA move to the P and E sites, respectively. Catalyzes the coordinated movement of the two tRNA molecules, the mRNA and conformational changes in the ribosome. The polypeptide is Elongation factor G (Photorhabdus laumondii subsp. laumondii (strain DSM 15139 / CIP 105565 / TT01) (Photorhabdus luminescens subsp. laumondii)).